We begin with the raw amino-acid sequence, 158 residues long: Protein-export protein SecB (158 aa).

It belongs to the SecB family. Homotetramer, a dimer of dimers. One homotetramer interacts with 1 SecA dimer.

It is found in the cytoplasm. Functionally, one of the proteins required for the normal export of preproteins out of the cell cytoplasm. It is a molecular chaperone that binds to a subset of precursor proteins, maintaining them in a translocation-competent state. It also specifically binds to its receptor SecA. This Pectobacterium atrosepticum (strain SCRI 1043 / ATCC BAA-672) (Erwinia carotovora subsp. atroseptica) protein is Protein-export protein SecB.